Reading from the N-terminus, the 110-residue chain is MKRITINIITMFIAAAVISLTGTAEAAEKQQQSPANVTLTDQQKKEIEQLEAEILKKRKDVISKYVQYGILPKERGEHIKNHLDKHFEMMKQNGFVPKHHPHPHKFEKRH.

The first 23 residues, 1–23 (MKRITINIITMFIAAAVISLTGT), serve as a signal peptide directing secretion.

This is an uncharacterized protein from Bacillus subtilis (strain 168).